The following is a 612-amino-acid chain: Pentatricopeptide repeat-containing protein At4g14050, mitochondrial (612 aa).

Residues 1–24 (MLIPHYLHQLQLCARNRTLTTAKA) constitute a mitochondrion transit peptide. 11 PPR repeats span residues 37–71 (CCPL…DHIA), 72–103 (WASV…GLRP), 104–138 (DDFV…EYAN), 139–169 (DEVV…IRVK), 170–204 (NTIS…NLYS), 205–235 (WTAL…RVDI), 237–271 (DPLV…GFDS), 272–302 (CVFI…MRHR), 303–337 (DVVS…GVKP), 338–373 (NEVT…GIRP), and 374–408 (SLQH…PDEP). The interval 409 to 485 (TWAALLSACK…DPGHSSVEVR (77 aa)) is type E motif. Residues 486–516 (KETEVFYAGETSHPLKEDIFRLLKKLEEEMR) form a type E(+) motif region. The tract at residues 518-612 (RNGYVPDTSW…GGKCSCNDFW (95 aa)) is type DYW motif.

The protein belongs to the PPR family. PCMP-H subfamily. In terms of assembly, interacts with MORF8/RIP1 and MORF1/RIP8.

It is found in the mitochondrion. Its function is as follows. Involved in C-to-U editing of mitochondrial RNA. Required specifically for editing the mitochondrial NAD4, MT-CYB/COB and RPL16 transcripts. The sequence is that of Pentatricopeptide repeat-containing protein At4g14050, mitochondrial (PCMP-H13) from Arabidopsis thaliana (Mouse-ear cress).